Consider the following 69-residue polypeptide: DNA gyrase inhibitor YacG (69 aa).

Over residues methionine 1–arginine 15 the composition is skewed to basic and acidic residues. Residues methionine 1–glutamate 22 are disordered. Zn(2+) is bound by residues cysteine 20, cysteine 23, cysteine 35, and cysteine 39.

This sequence belongs to the DNA gyrase inhibitor YacG family. In terms of assembly, interacts with GyrB. Zn(2+) serves as cofactor.

Functionally, inhibits all the catalytic activities of DNA gyrase by preventing its interaction with DNA. Acts by binding directly to the C-terminal domain of GyrB, which probably disrupts DNA binding by the gyrase. This is DNA gyrase inhibitor YacG from Allorhizobium ampelinum (strain ATCC BAA-846 / DSM 112012 / S4) (Agrobacterium vitis (strain S4)).